The primary structure comprises 274 residues: Large ribosomal subunit protein uL2cz/uL2cy (274 aa).

2 disordered regions span residues 1–22 (MAIH…DSQV) and 223–274 (MNPV…RRTK).

Belongs to the universal ribosomal protein uL2 family. In terms of assembly, part of the 50S ribosomal subunit.

Its subcellular location is the plastid. The protein resides in the chloroplast. This is Large ribosomal subunit protein uL2cz/uL2cy (rpl2-A) from Phaseolus vulgaris (Kidney bean).